A 437-amino-acid polypeptide reads, in one-letter code: Purple acid phosphatase 21 (437 aa).

The signal sequence occupies residues 1–25 (MKKMKIFGFLISFSLFFLSPFVCQA). The N-linked (GlcNAc...) asparagine glycan is linked to Asn-30. Residues Asp-152, Asp-179, and Tyr-182 each contribute to the Fe cation site. Asp-179 contributes to the Zn(2+) binding site. Positions 212 and 296 each coordinate Zn(2+). Asn-212 is a binding site for substrate. The active-site Proton donor is His-306. His-333 is a binding site for Zn(2+). Residue 333-335 (HVH) participates in substrate binding. His-335 provides a ligand contact to Fe cation.

This sequence belongs to the metallophosphoesterase superfamily. Purple acid phosphatase family. In terms of assembly, homodimer. It depends on Fe cation as a cofactor. Zn(2+) is required as a cofactor. As to expression, expressed flowers and siliques.

Its subcellular location is the secreted. The catalysed reaction is a phosphate monoester + H2O = an alcohol + phosphate. The chain is Purple acid phosphatase 21 (PAP21) from Arabidopsis thaliana (Mouse-ear cress).